Here is a 156-residue protein sequence, read N- to C-terminus: Small ribosomal subunit protein uS7 (156 aa).

Belongs to the universal ribosomal protein uS7 family. Part of the 30S ribosomal subunit. Contacts proteins S9 and S11.

Its function is as follows. One of the primary rRNA binding proteins, it binds directly to 16S rRNA where it nucleates assembly of the head domain of the 30S subunit. Is located at the subunit interface close to the decoding center, probably blocks exit of the E-site tRNA. The protein is Small ribosomal subunit protein uS7 of Lachnospira eligens (strain ATCC 27750 / DSM 3376 / VPI C15-48 / C15-B4) (Eubacterium eligens).